Reading from the N-terminus, the 198-residue chain is Recombination protein RecR (198 aa).

The C4-type zinc-finger motif lies at 57–72 (CSICGNITEEDPCEIC). Residues 80–175 (SIILVVEEPK…TVTRLAHGLS (96 aa)) enclose the Toprim domain.

The protein belongs to the RecR family.

Functionally, may play a role in DNA repair. It seems to be involved in an RecBC-independent recombinational process of DNA repair. It may act with RecF and RecO. The sequence is that of Recombination protein RecR from Enterococcus faecalis (strain ATCC 700802 / V583).